A 238-amino-acid chain; its full sequence is D/L-lactic acid transporter (238 aa).

2 consecutive transmembrane segments (helical) span residues 2–22 and 39–59; these read VHQLIAEFMGTALMIIFGVGV and IFAITTWGFGISVALFIFGNV. The NPA 1 motif lies at 62–64; it reads NPA. The next 3 membrane-spanning stretches (helical) occupy residues 80–100, 135–155, and 158–178; these read FIPYSVAEVLGGVVGSVIVWI, FFVELFDTFIFISGILAISEI, and PGIVPIGVGLLVWAIGMGLGG. An NPA 2 motif is present at residues 185–187; that stretch reads NLA. Residues 211–231 form a helical membrane-spanning segment; that stretch reads YGIIVPGIAPFVGAAIAAWFM.

The protein belongs to the MIP/aquaporin (TC 1.A.8) family.

It is found in the cell membrane. Transporter that facilitates the transmembrane diffusion of D/L-lactic acid. Is involved in the cellular racemization of lactate and lactate metabolism. The transported molecule is indeed lactic acid and not the lactate anion, in agreement with the assumption that, with very few exceptions, MIPs (major intrinsic proteins) only facilitate the transport of uncharged solutes. Also facilitates urea and H(2)O(2) diffusion across membranes, but is not permeable to water, glycerol and dihydroxyacetone. This Lactiplantibacillus plantarum (strain ATCC BAA-793 / NCIMB 8826 / WCFS1) (Lactobacillus plantarum) protein is D/L-lactic acid transporter.